Reading from the N-terminus, the 330-residue chain is Beta-ketoacyl-[acyl-carrier-protein] synthase III (330 aa).

Active-site residues include Cys115 and His255. The segment at 256–260 (QANFR) is ACP-binding. The active site involves Asn285.

The protein belongs to the thiolase-like superfamily. FabH family. Homodimer.

It is found in the cytoplasm. It carries out the reaction malonyl-[ACP] + acetyl-CoA + H(+) = 3-oxobutanoyl-[ACP] + CO2 + CoA. The protein operates within lipid metabolism; fatty acid biosynthesis. In terms of biological role, catalyzes the condensation reaction of fatty acid synthesis by the addition to an acyl acceptor of two carbons from malonyl-ACP. Catalyzes the first condensation reaction which initiates fatty acid synthesis and may therefore play a role in governing the total rate of fatty acid production. Possesses both acetoacetyl-ACP synthase and acetyl transacylase activities. Its substrate specificity determines the biosynthesis of branched-chain and/or straight-chain of fatty acids. This is Beta-ketoacyl-[acyl-carrier-protein] synthase III from Helicobacter pylori (strain HPAG1).